The chain runs to 428 residues: FAD-dependent monooxygenase kojA (428 aa).

FAD is bound by residues 52-60 (RLHKGPHYP) and 328-329 (SV).

It belongs to the aromatic-ring hydroxylase family. FAD serves as cofactor.

Functionally, probable FAD-dependent monooxygenase; part of the gene cluster that mediates the biosynthesis of 5-hydroxy-2-hydroxymethyl-1,4-pyrone, also know as kojic acid, a by-product in the fermentation process of malting rice that acts as a chelation agent. Glucose might be converted to kojic acid by a combination of dehydrogenase and dehydratase reactions involving kojA and probably additional enzymes. This is FAD-dependent monooxygenase kojA from Aspergillus flavus (strain ATCC 200026 / FGSC A1120 / IAM 13836 / NRRL 3357 / JCM 12722 / SRRC 167).